Here is a 371-residue protein sequence, read N- to C-terminus: Archaeal glycosylation protein Q (371 aa).

Residues 19-39 (QRSDGSMPAGHNGPYHDPETP) form a disordered region.

The protein localises to the cytoplasm. It functions in the pathway cell surface structure biogenesis; S-layer biogenesis. Functionally, putative isomerase involved in the N-glycosylation pathway. Required for the appearance of the methyl ester of hexuronic acid found at position four of the pentasaccharide N-linked to the S-layer glycoprotein. Either involved in preparing the third sugar for attachment of the fourth pentasaccharide subunit or processing the fourth sugar prior to its addition to the lipid-linked trisaccharide. This is Archaeal glycosylation protein Q (aglQ) from Haloferax volcanii (strain ATCC 29605 / DSM 3757 / JCM 8879 / NBRC 14742 / NCIMB 2012 / VKM B-1768 / DS2) (Halobacterium volcanii).